A 282-amino-acid polypeptide reads, in one-letter code: MTLLDGKALSAKIKEELKEKNQFLKSKGIESCLAVILVGNNPASQTYVKSKAKACEECGIKSLVYHLNENTTQNELLALINTLNHDDSVHGILVQLPLPDHICKDLILESIISSKDVDGFHPINVGYLNLGLESGFLPCTPLGVMKLLKAYEIDLKGKDAVIIGASNIVGRPMATMLLNAGATVSVCHIKTKDLSLYTRQADLIIVAAGCVNLLRSDMVKEGVIVVDVGINRLESGKIVGDVDFEEVSKKSSYITPVPCGVGPMTIAMLLENTVKSAKNRLN.

NADP(+) is bound by residues 164–166 (GAS), Ile189, and Ile230.

The protein belongs to the tetrahydrofolate dehydrogenase/cyclohydrolase family. As to quaternary structure, homodimer.

It carries out the reaction (6R)-5,10-methylene-5,6,7,8-tetrahydrofolate + NADP(+) = (6R)-5,10-methenyltetrahydrofolate + NADPH. The enzyme catalyses (6R)-5,10-methenyltetrahydrofolate + H2O = (6R)-10-formyltetrahydrofolate + H(+). The protein operates within one-carbon metabolism; tetrahydrofolate interconversion. In terms of biological role, catalyzes the oxidation of 5,10-methylenetetrahydrofolate to 5,10-methenyltetrahydrofolate and then the hydrolysis of 5,10-methenyltetrahydrofolate to 10-formyltetrahydrofolate. The sequence is that of Bifunctional protein FolD from Campylobacter jejuni subsp. doylei (strain ATCC BAA-1458 / RM4099 / 269.97).